The following is a 304-amino-acid chain: tRNA pseudouridine synthase B (304 aa).

D48 serves as the catalytic Nucleophile.

This sequence belongs to the pseudouridine synthase TruB family. Type 1 subfamily.

The catalysed reaction is uridine(55) in tRNA = pseudouridine(55) in tRNA. Responsible for synthesis of pseudouridine from uracil-55 in the psi GC loop of transfer RNAs. In Pseudomonas paraeruginosa (strain DSM 24068 / PA7) (Pseudomonas aeruginosa (strain PA7)), this protein is tRNA pseudouridine synthase B.